A 245-amino-acid polypeptide reads, in one-letter code: Suppressor of aph-1 (245 aa).

In terms of domain architecture, GYF spans Asp-12–Gly-60. Residues Asn-126–Thr-166 are disordered.

Its function is as follows. Involved in negative regulation of early and late embryonic Notch signaling. This Caenorhabditis elegans protein is Suppressor of aph-1.